The primary structure comprises 463 residues: Glutamate--tRNA ligase (463 aa).

The 'HIGH' region motif lies at 10 to 20; that stretch reads PSPTGHLHIGG. Residues 236-240 carry the 'KMSKS' region motif; it reads KLSKR. K239 serves as a coordination point for ATP.

Belongs to the class-I aminoacyl-tRNA synthetase family. Glutamate--tRNA ligase type 1 subfamily. In terms of assembly, monomer.

The protein localises to the cytoplasm. It catalyses the reaction tRNA(Glu) + L-glutamate + ATP = L-glutamyl-tRNA(Glu) + AMP + diphosphate. Functionally, catalyzes the attachment of glutamate to tRNA(Glu) in a two-step reaction: glutamate is first activated by ATP to form Glu-AMP and then transferred to the acceptor end of tRNA(Glu). The polypeptide is Glutamate--tRNA ligase (Nitratidesulfovibrio vulgaris (strain ATCC 29579 / DSM 644 / CCUG 34227 / NCIMB 8303 / VKM B-1760 / Hildenborough) (Desulfovibrio vulgaris)).